Reading from the N-terminus, the 412-residue chain is Polyferredoxin protein MvhB (412 aa).

12 4Fe-4S ferredoxin-type domains span residues 1–29 (MIVVNKEDCIRCGACQGTCPTAAIEVTPE), 30–57 (DVIYCDICGGEPKCVDACPTGALKIEDL), 67–96 (GRIVFNPDKCNECGDCVEVCPPQILKLDEG), 97–127 (KVKKIPLQGFCVMCQKCVDICPVGVIGVEGI), 138–166 (EGPIFIADCVGCGMCVPECPVDAITLEKV), 168–197 (GVIEIDEDTCIKCGVCAQTCPWNAVYISGK), 207–236 (RKFELDEEACIGCNTCVEACPGDFIVPKSS), 238–266 (LTVELPAICTACGLCEQLCPVDAIDLDVE), 276–305 (EGLVWDEGKCDFIGACANICPNDAIRVVTR), 314–345 (EKVDEEPSFAMCTRCGACTMACPKGALSLVDM), 357–386 (KRVQYNPALCDQCGDCIEACPYDMLKLTDE), and 385–412 (DEKVPLKGFCILCDQCIPACPKGALSLK). The [4Fe-4S] cluster site is built by Cys9, Cys12, Cys15, and Cys19. 24 residues coordinate [4Fe-4S] cluster: Cys76, Cys79, Cys82, Cys86, Cys107, Cys110, Cys113, Cys117, Cys146, Cys149, Cys152, Cys156, Cys177, Cys180, Cys183, Cys187, Cys216, Cys219, Cys222, Cys226, Cys246, Cys249, Cys252, and Cys256. 12 residues coordinate [4Fe-4S] cluster: Cys325, Cys328, Cys331, Cys335, Cys366, Cys369, Cys372, Cys376, Cys394, Cys397, Cys400, and Cys404.

[4Fe-4S] cluster is required as a cofactor.

This is Polyferredoxin protein MvhB (mvhB) from Methanothermobacter marburgensis (strain ATCC BAA-927 / DSM 2133 / JCM 14651 / NBRC 100331 / OCM 82 / Marburg) (Methanobacterium thermoautotrophicum).